The sequence spans 606 residues: V-type proton ATPase catalytic subunit A (606 aa).

At A2 the chain carries N-acetylalanine. A240 to V247 serves as a coordination point for ATP.

This sequence belongs to the ATPase alpha/beta chains family. As to quaternary structure, V-ATPase is a heteromultimeric enzyme made up of two complexes: the ATP-hydrolytic V1 complex and the proton translocation V0 complex. The V1 complex consists of three catalytic AB heterodimers that form a heterohexamer, three peripheral stalks each consisting of EG heterodimers, one central rotor including subunits D and F, and the regulatory subunits C and H. The proton translocation complex V0 consists of the proton transport subunit a, a ring of proteolipid subunits c9c'', rotary subunit d, subunits e and f, and the accessory subunits vah-19/Ac45 and vah-20/PRR. Expressed in proximal but not distal germ cells.

It carries out the reaction ATP + H2O + 4 H(+)(in) = ADP + phosphate + 5 H(+)(out). Its activity is regulated as follows. ATP hydrolysis occurs at the interface between the nucleotide-binding domains of subunits A and B. ATP hydrolysis triggers a conformational change in the subunits D and F, which induces a shift of subunit d. The c-ring is subsequently rotated and results in a continuous proton translocation across the membrane. Functionally, catalytic subunit of the V1 complex of vacuolar(H+)-ATPase (V-ATPase), a multisubunit enzyme composed of a peripheral complex (V1) that hydrolyzes ATP and a membrane integral complex (V0) that translocates protons. V-ATPase is responsible for acidifying and maintaining the pH of intracellular compartments and in some cell types, is targeted to the plasma membrane, where it is responsible for acidifying the extracellular environment. Required along with other vacuolar ATPase components for the removal of protein aggregates which form in immature oocytes in the distal gonad. This removal occurs as the oocytes mature and move to the proximal gonad, is triggered by the introduction of sperm through mating and occurs before fertilization. The introduction of sperm triggers V-ATPase accumulation in proximal oocytes and induces lysosomal acidification which leads to engulfing of protein aggregates by lysosomes and subsequent clearance of the aggregates. Lysosomal acidification also leads to changes in mitochondrial morphology and function. Mitochondria in distal immature oocytes are fragmented, produce high levels of reactive oxygen species (ROS) and have high membrane potential, indicative of metabolic inactivity. In contrast, mitochondria in proximal mature oocytes are tubular with lower ROS levels and membrane potential, indicative of an active metabolic state required for aggregate mobilization before clearance. Involved in receptor-mediated endocytosis. This is V-type proton ATPase catalytic subunit A from Caenorhabditis elegans.